Reading from the N-terminus, the 107-residue chain is Glutaconyl-CoA decarboxylase subunit delta (107 aa).

The helical transmembrane segment at Met-10–Ala-32 threads the bilayer. The disordered stretch occupies residues Lys-37–Gln-60. The segment covering Val-47–Ser-57 has biased composition (low complexity).

This sequence belongs to the OadG family. In terms of assembly, heterooctamer consisting of two alpha, two beta, two gamma and two delta subunits.

The protein localises to the cell membrane. It carries out the reaction (2E)-glutaconyl-CoA + Na(+)(in) + H(+) = (2E)-butenoyl-CoA + Na(+)(out) + CO2. Its pathway is amino-acid degradation; L-glutamate degradation via hydroxyglutarate pathway; crotonoyl-CoA from L-glutamate: step 5/5. Functionally, part of the primary sodium pump glutaconyl-CoA decarboxylase (GCD). Possible membrane anchor for the alpha subunit. In Acidaminococcus fermentans (strain ATCC 25085 / DSM 20731 / CCUG 9996 / CIP 106432 / VR4), this protein is Glutaconyl-CoA decarboxylase subunit delta (gcdD).